The following is a 207-amino-acid chain: dITP/XTP pyrophosphatase (207 aa).

Thr11 to Lys16 serves as a coordination point for substrate. Asp72 acts as the Proton acceptor in catalysis. Asp72 contributes to the Mg(2+) binding site. Substrate-binding positions include Ser73, Phe154–Asp157, Lys177, and His182–Arg183.

This sequence belongs to the HAM1 NTPase family. As to quaternary structure, homodimer. Mg(2+) is required as a cofactor.

The enzyme catalyses XTP + H2O = XMP + diphosphate + H(+). It carries out the reaction dITP + H2O = dIMP + diphosphate + H(+). The catalysed reaction is ITP + H2O = IMP + diphosphate + H(+). Its function is as follows. Pyrophosphatase that catalyzes the hydrolysis of nucleoside triphosphates to their monophosphate derivatives, with a high preference for the non-canonical purine nucleotides XTP (xanthosine triphosphate), dITP (deoxyinosine triphosphate) and ITP. Seems to function as a house-cleaning enzyme that removes non-canonical purine nucleotides from the nucleotide pool, thus preventing their incorporation into DNA/RNA and avoiding chromosomal lesions. The chain is dITP/XTP pyrophosphatase from Thermus thermophilus (strain ATCC BAA-163 / DSM 7039 / HB27).